Here is a 143-residue protein sequence, read N- to C-terminus: Glutamate-rich protein 4 (143 aa).

A compositionally biased stretch (acidic residues) spans 90 to 106; it reads LEEEEEDDDEEEQEEEG. The segment at 90–143 is disordered; that stretch reads LEEEEEDDDEEEQEEEGEGKNCVEENKGLQGKQGEKCSGNPYPAQRLPDFEMTI. Over residues 107 to 116 the composition is skewed to basic and acidic residues; sequence EGKNCVEENK.

The chain is Glutamate-rich protein 4 (Erich4) from Rattus norvegicus (Rat).